The chain runs to 116 residues: Large ribosomal subunit protein bL17 (116 aa).

Belongs to the bacterial ribosomal protein bL17 family. Part of the 50S ribosomal subunit. Contacts protein L32.

The sequence is that of Large ribosomal subunit protein bL17 from Deinococcus geothermalis (strain DSM 11300 / CIP 105573 / AG-3a).